We begin with the raw amino-acid sequence, 243 residues long: uncharacterized protein (243 aa).

This is an uncharacterized protein from Acanthamoeba polyphaga (Amoeba).